Consider the following 275-residue polypeptide: L-aspartate dehydrogenase (275 aa).

A130 and N196 together coordinate NAD(+). The active site involves H226.

Belongs to the L-aspartate dehydrogenase family.

The enzyme catalyses L-aspartate + NADP(+) + H2O = oxaloacetate + NH4(+) + NADPH + H(+). The catalysed reaction is L-aspartate + NAD(+) + H2O = oxaloacetate + NH4(+) + NADH + H(+). The protein operates within cofactor biosynthesis; NAD(+) biosynthesis; iminoaspartate from L-aspartate (dehydrogenase route): step 1/1. Functionally, specifically catalyzes the NAD or NADP-dependent dehydrogenation of L-aspartate to iminoaspartate. The protein is L-aspartate dehydrogenase of Ruegeria pomeroyi (strain ATCC 700808 / DSM 15171 / DSS-3) (Silicibacter pomeroyi).